A 697-amino-acid chain; its full sequence is Gametogenetin-binding protein 2 (697 aa).

Serine 360 is modified (phosphoserine).

As to quaternary structure, interacts with GGN. In terms of tissue distribution, expressed in heart, brain, placenta, lung, liver, skeletal muscle, kidney and pancreas. Expressed more abundantly in heart, pancreas and skeletal muscle.

The protein resides in the cytoplasmic vesicle. Functionally, may be involved in spermatogenesis. The chain is Gametogenetin-binding protein 2 (GGNBP2) from Homo sapiens (Human).